Consider the following 440-residue polypeptide: 2-methylisoborneol synthase (440 aa).

Disordered stretches follow at residues 1-33 (MPDS…IPSA) and 46-74 (LHPP…TVTG). 2 stretches are compositionally biased toward pro residues: residues 9-29 (TPPP…PAPV) and 50-63 (VTVP…PPAP). 6 residues coordinate Mg(2+): D197, D198, E202, N345, S349, and E353.

The protein belongs to the terpene synthase family. 2-methylisoborneol synthase subfamily. Mg(2+) serves as cofactor.

The enzyme catalyses (E)-2-methylgeranyl diphosphate + H2O = 2-methylisoborneol + diphosphate. In terms of biological role, catalyzes the cyclization of 2-methylgeranyl diphosphate (2-MeGPP) to 2-methylisoborneol (2-MIB), which likely involves the intermediacy of 2-methyllinalyl diphosphate. Is also able to catalyze the cyclization of geranyl diphosphate (GPP), albeit with much lower efficiency, leading to the formation of a complex mixture of cyclic monoterpenes, consisting of alpha-pinene (6%), beta-pinene (23%), limonene (32%), gamma-terpinene (29%), and delta-terpinene (10%). The chain is 2-methylisoborneol synthase from Streptomyces coelicolor (strain ATCC BAA-471 / A3(2) / M145).